The primary structure comprises 152 residues: Avidin (152 aa).

An N-terminal signal peptide occupies residues 1–24 (MVHATSPLLLLLLLSLALVAPGLS). The Avidin-like domain occupies 26-149 (RKCSLTGKWT…GINIFTRLRT (124 aa)). An intrachain disulfide couples Cys-28 to Cys-107. An N-linked (GlcNAc...) asparagine glycan is attached at Asn-41. Position 57 (Tyr-57) interacts with biotin.

The protein belongs to the avidin/streptavidin family. In terms of assembly, homotetramer. N-linked glycan at Asn-41 consists of GlcNAc(beta1-2)Man(alpha1-3)[GlcNAc(beta1-4)][Man(alpha1-?)Man(alpha1-6)] Man(beta1-4)GlcNAc(beta1-4)GlcNAc. Synthesized in hen oviduct and concentrated in egg white (where it represents 0.05% of the total protein).

The protein localises to the secreted. The biological function of avidin is not known. Forms a strong non-covalent specific complex with biotin (one molecule of biotin per subunit of avidin). This Gallus gallus (Chicken) protein is Avidin (AVD).